Consider the following 551-residue polypeptide: Probable inorganic carbon transporter subunit DabB2 (551 aa).

Transmembrane regions (helical) follow at residues 6 to 26 (SHTTGLLLLAMPALLLMAAVI), 42 to 62 (VQWTSFAAFGLALLAVVSFLF), 65 to 85 (QQNLMLGAGSLPAGLGLLALS), 86 to 106 (IQVNGLTLVLASLVSFVLSVI), 132 to 152 (GFFLLVVISGNLGLFTLAIIA), 187 to 207 (LLLAATVLIGHQIGSLEFSQI), 217 to 237 (LSIALHVAAWLIVLAAILKSA), 252 to 272 (PTPVSALMHAGVVYSGAIIVL), 284 to 304 (ALLLLALIGLMTLAIGSLVML), 321 to 341 (LGFMMLELGLGLFGLALLHLV), 374 to 394 (VVAWFTTVIVSGLFTLGIAAA), 404 to 424 (MLPAVLTIIALATAQLMLKAL), 434 to 454 (VAAGAAIAMTGVYVFLHEVFI), and 469 to 489 (PLLDLLLMAITIITFLFVAWL).

Belongs to the inorganic carbon transporter (TC 9.A.2) DabB family. Forms a complex with DabA2, possibly a heterodimer.

The protein localises to the cell inner membrane. Its activity is regulated as follows. Uptake of inorganic carbon by cells in the presence of thiosulphate is fully inhibited by the uncouplers carbonyl cyanide m-chlorophenyl hydrazone (CCCP), carbonyl cyanide p-trifluoromethoxyphenyl hydrazone (FCCP), S13 or SF6847. Not inhibited by the ATPase inhibitor N,N-dicyclohexylcarbodiimide (DCCD). Inorganic carbon uptake is inhibited by the ionophore carbonyl cyanide m-chlorophenyl hydrazone (CCCP), suggesting uptake is coupled to a cation gradient. In terms of biological role, part of an energy-coupled inorganic carbon pump; its substrate may be carbon dioxide. Expression of both dabA2 and dabB2 (DAB2) restores growth in ambient air to E.coli deleted of its carbonic anhydrase genes (called CAfree, deletion of 'can' and 'cynT'); neither dabA2 or dabB2 alone is sufficient. Rescue is pH-independent, suggesting it transports CO(2) and not carbonate ions. Together the genes allow greater than normal uptake of inorganic carbon by E.coli. Uptake of carbon dioxide rather than bicarbonate has been suggested based on kinetic calculations. The chain is Probable inorganic carbon transporter subunit DabB2 from Halothiobacillus neapolitanus (strain ATCC 23641 / c2) (Thiobacillus neapolitanus).